A 122-amino-acid chain; its full sequence is Large ribosomal subunit protein uL14 (122 aa).

Belongs to the universal ribosomal protein uL14 family. As to quaternary structure, part of the 50S ribosomal subunit. Forms a cluster with proteins L3 and L19. In the 70S ribosome, L14 and L19 interact and together make contacts with the 16S rRNA in bridges B5 and B8.

Functionally, binds to 23S rRNA. Forms part of two intersubunit bridges in the 70S ribosome. This chain is Large ribosomal subunit protein uL14, found in Corynebacterium glutamicum (strain R).